We begin with the raw amino-acid sequence, 107 residues long: Integration host factor subunit beta (107 aa).

The segment at 76–107 (FVPHFKPGKELRERVDGRAGEPLKADDPDDER) is disordered. Basic and acidic residues predominate over residues 82 to 101 (PGKELRERVDGRAGEPLKAD).

This sequence belongs to the bacterial histone-like protein family. In terms of assembly, heterodimer of an alpha and a beta chain.

This protein is one of the two subunits of integration host factor, a specific DNA-binding protein that functions in genetic recombination as well as in transcriptional and translational control. The sequence is that of Integration host factor subunit beta from Burkholderia cenocepacia (strain ATCC BAA-245 / DSM 16553 / LMG 16656 / NCTC 13227 / J2315 / CF5610) (Burkholderia cepacia (strain J2315)).